Reading from the N-terminus, the 239-residue chain is Purine nucleoside phosphorylase DeoD-type (239 aa).

Histidine 5 contacts a purine D-ribonucleoside. Residues glycine 21, arginine 25, arginine 44, and 88-91 (RVGS) each bind phosphate. Residues 180–182 (EME) and 204–205 (SD) contribute to the a purine D-ribonucleoside site. The active-site Proton donor is aspartate 205.

This sequence belongs to the PNP/UDP phosphorylase family. In terms of assembly, homohexamer; trimer of homodimers.

It catalyses the reaction a purine D-ribonucleoside + phosphate = a purine nucleobase + alpha-D-ribose 1-phosphate. The enzyme catalyses a purine 2'-deoxy-D-ribonucleoside + phosphate = a purine nucleobase + 2-deoxy-alpha-D-ribose 1-phosphate. In terms of biological role, catalyzes the reversible phosphorolytic breakdown of the N-glycosidic bond in the beta-(deoxy)ribonucleoside molecules, with the formation of the corresponding free purine bases and pentose-1-phosphate. This is Purine nucleoside phosphorylase DeoD-type from Erwinia tasmaniensis (strain DSM 17950 / CFBP 7177 / CIP 109463 / NCPPB 4357 / Et1/99).